The chain runs to 316 residues: HPr kinase/phosphorylase (316 aa).

Catalysis depends on residues H143 and K164. Residue 158–165 coordinates ATP; sequence GEAGSGKS. S165 contacts Mg(2+). The Proton acceptor; for phosphorylation activity. Proton donor; for dephosphorylation activity role is filled by D182. Residues 206–215 form an important for the catalytic mechanism of both phosphorylation and dephosphorylation region; that stretch reads LEVRGLGVLN. E207 lines the Mg(2+) pocket. The active site involves R251. An important for the catalytic mechanism of dephosphorylation region spans residues 272–277; the sequence is PVMPGR.

Belongs to the HPrK/P family. As to quaternary structure, homohexamer. Requires Mg(2+) as cofactor.

The catalysed reaction is [HPr protein]-L-serine + ATP = [HPr protein]-O-phospho-L-serine + ADP + H(+). It catalyses the reaction [HPr protein]-O-phospho-L-serine + phosphate + H(+) = [HPr protein]-L-serine + diphosphate. Its function is as follows. Catalyzes the ATP- as well as the pyrophosphate-dependent phosphorylation of a specific serine residue in HPr, a phosphocarrier protein of the phosphoenolpyruvate-dependent sugar phosphotransferase system (PTS). HprK/P also catalyzes the pyrophosphate-producing, inorganic phosphate-dependent dephosphorylation (phosphorolysis) of seryl-phosphorylated HPr (P-Ser-HPr). The polypeptide is HPr kinase/phosphorylase (Xylella fastidiosa (strain 9a5c)).